The primary structure comprises 75 residues: Putative membrane protein insertion efficiency factor (75 aa).

The protein belongs to the UPF0161 family.

It localises to the cell membrane. Functionally, could be involved in insertion of integral membrane proteins into the membrane. This chain is Putative membrane protein insertion efficiency factor, found in Halalkalibacterium halodurans (strain ATCC BAA-125 / DSM 18197 / FERM 7344 / JCM 9153 / C-125) (Bacillus halodurans).